Reading from the N-terminus, the 94-residue chain is Large ribosomal subunit protein uL24c (94 aa).

Belongs to the universal ribosomal protein uL24 family. As to quaternary structure, part of the 50S ribosomal subunit.

The protein resides in the plastid. The protein localises to the chloroplast. In terms of biological role, one of two assembly initiator proteins, it binds directly to the 5'-end of the 23S rRNA, where it nucleates assembly of the 50S subunit. This chain is Large ribosomal subunit protein uL24c (rpl24), found in Cyanidium caldarium (Red alga).